The primary structure comprises 131 residues: Holo-[acyl-carrier-protein] synthase (131 aa).

The Mg(2+) site is built by Asp-8 and Glu-59.

This sequence belongs to the P-Pant transferase superfamily. AcpS family. It depends on Mg(2+) as a cofactor.

The protein resides in the cytoplasm. The catalysed reaction is apo-[ACP] + CoA = holo-[ACP] + adenosine 3',5'-bisphosphate + H(+). Functionally, transfers the 4'-phosphopantetheine moiety from coenzyme A to a Ser of acyl-carrier-protein. The protein is Holo-[acyl-carrier-protein] synthase of Rickettsia rickettsii (strain Iowa).